A 519-amino-acid chain; its full sequence is Cytochrome P450 monooxygenase easM (519 aa).

The helical transmembrane segment at 16–33 (VAPALFASSISVLFLILS) threads the bilayer. N-linked (GlcNAc...) asparagine glycosylation is found at Asn-50 and Asn-353. Heme is bound at residue Cys-458.

The protein belongs to the cytochrome P450 family. Heme is required as a cofactor.

The protein localises to the membrane. It functions in the pathway alkaloid biosynthesis; ergot alkaloid biosynthesis. Cytochrome P450 monooxygenase; part of the gene cluster that mediates the biosynthesis of fumiclavanine C, a fungal ergot alkaloid. DmaW catalyzes the first step of ergot alkaloid biosynthesis by condensing dimethylallyl diphosphate (DMAP) and tryptophan to form 4-dimethylallyl-L-tryptophan. The second step is catalyzed by the methyltransferase easF that methylates 4-dimethylallyl-L-tryptophan in the presence of S-adenosyl-L-methionine, resulting in the formation of 4-dimethylallyl-L-abrine. The catalase easC and the FAD-dependent oxidoreductase easE then transform 4-dimethylallyl-L-abrine to chanoclavine-I which is further oxidized by EasD in the presence of NAD(+), resulting in the formation of chanoclavine-I aldehyde. EasA reduces chanoclavine-I aldehyde to dihydrochanoclavine-I aldehyde that spontaneously dehydrates to form 6,8-dimethyl-6,7-didehydroergoline. EasG then catalyzes the reduction of 6,8-dimethyl-6,7-didehydroergoline to form festuclavine. Hydrolysis of festuclavine by easM then leads to the formation of fumigaclavine B which is in turn acetylated by easN to fumigaclavine A. Finally, easL catalyzes the conversion of fumigaclavine A into fumigaclavine C by attaching a dimethylallyl moiety to C-2 of the indole nucleus. In Aspergillus fumigatus (strain ATCC MYA-4609 / CBS 101355 / FGSC A1100 / Af293) (Neosartorya fumigata), this protein is Cytochrome P450 monooxygenase easM.